The chain runs to 999 residues: Hypoxia up-regulated protein 1 (999 aa).

Positions 1–32 (MAATVRRQRPRRLLCWALVAVLLADLLALSDT) are cleaved as a signal peptide. N-linked (GlcNAc...) asparagine glycosylation is found at N155, N222, and N515. Residues 564 to 694 (VEDSPEEEST…KKQKPARKQK (131 aa)) are disordered. S567 is modified (phosphoserine). A compositionally biased stretch (polar residues) spans 574 to 583 (LTKLGNTISS). The N-linked (GlcNAc...) asparagine glycan is linked to N596. Composition is skewed to basic and acidic residues over residues 611–626 (GSKD…KEEA) and 641–668 (PKGD…KPNE). 3 N-linked (GlcNAc...) asparagine glycosylation sites follow: N830, N862, and N869. The residue at position 883 (K883) is an N6-acetyllysine. A disordered region spans residues 909–999 (AKFTKPRPRP…QKRPLKNDEL (91 aa)). N-linked (GlcNAc...) asparagine glycans are attached at residues N922 and N931. Over residues 949 to 962 (EEAKAILEPDKEGL) the composition is skewed to basic and acidic residues. Residues 996-999 (NDEL) carry the Prevents secretion from ER motif.

It belongs to the heat shock protein 70 family. As to quaternary structure, part of a large chaperone multiprotein complex comprising DNAJB11, HSP90B1, HSPA5, HYOU, PDIA2, PDIA4, PDIA6, PPIB, SDF2L1, UGGT1 and very small amounts of ERP29, but not, or at very low levels, CALR nor CANX. As to expression, selectively expressed by cultured astrocytes but not endothelial cells, microglia or neurons.

It localises to the endoplasmic reticulum lumen. In terms of biological role, has a pivotal role in cytoprotective cellular mechanisms triggered by oxygen deprivation. Promotes HSPA5/BiP-mediated ATP nucleotide exchange and thereby activates the unfolded protein response (UPR) pathway in the presence of endoplasmic reticulum stress. May play a role as a molecular chaperone and participate in protein folding. The polypeptide is Hypoxia up-regulated protein 1 (Hyou1) (Rattus norvegicus (Rat)).